Here is a 212-residue protein sequence, read N- to C-terminus: Leucine efflux protein (212 aa).

The next 6 helical transmembrane spans lie at Thr-12–Leu-32, Gly-49–Ile-69, Thr-71–Gly-91, Ile-122–Ile-142, Phe-153–Ile-173, and Leu-188–Ala-208.

Belongs to the Rht family.

Its subcellular location is the cell inner membrane. It carries out the reaction L-leucine(in) + H(+)(out) = L-leucine(out) + H(+)(in). Functionally, exporter of leucine. This Shigella sonnei (strain Ss046) protein is Leucine efflux protein (leuE).